Consider the following 160-residue polypeptide: SPbeta prophage-derived uncharacterized protein YokE (160 aa).

The protein is SPbeta prophage-derived uncharacterized protein YokE (yokE) of Bacillus subtilis (strain 168).